The sequence spans 1139 residues: Liprin-alpha (1139 aa).

4 coiled-coil regions span residues proline 30–methionine 144, glutamate 172–isoleucine 298, isoleucine 329–glutamine 517, and glutamine 655–aspartate 701. 2 disordered regions span residues tyrosine 700–methionine 720 and asparagine 764–lysine 847. Composition is skewed to polar residues over residues glycine 704–asparagine 719 and proline 778–aspartate 787. SAM domains are found at residues tryptophan 867–leucine 933, asparagine 952–valine 1016, and tryptophan 1040–aspartate 1109.

Belongs to the liprin family. Liprin-alpha subfamily. In terms of tissue distribution, detected in vulval muscle and other cells near the vulva; in neurons located in the lateral ganglion, posterior ganglion, ventral cord and lateral body; and in pharyngeal and body wall muscle cells.

It is found in the synapse. Its function is as follows. May play a role in regulating the structure of the neuronal region, called the active zone, from which synaptic vesicles send neurotransmitter signals across the synapse. This may be in association with the liprin-beta protein hlb-1. In Caenorhabditis elegans, this protein is Liprin-alpha.